Consider the following 131-residue polypeptide: UPF0102 protein YraN (131 aa).

Over residues 1–19 (MATVPTRSGSPRQLTTKQT) the composition is skewed to polar residues. Residues 1–21 (MATVPTRSGSPRQLTTKQTGD) form a disordered region.

The protein belongs to the UPF0102 family.

This Escherichia coli (strain K12 / MC4100 / BW2952) protein is UPF0102 protein YraN.